A 481-amino-acid polypeptide reads, in one-letter code: Solute carrier family 46 member 2 (481 aa).

Over 1 to 37 (MGPEAAGPGRGAAPRLQVRTWIEPVVAATQVASSLYE) the chain is Cytoplasmic. A helical transmembrane segment spans residues 38-58 (AGLLLVVKASFGAGAGAGAGA). Topologically, residues 59–83 (ASNHSAGPPRGAPEDQQQRAISNFY) are extracellular. A glycan (N-linked (GlcNAc...) asparagine) is linked at Asn61. The chain crosses the membrane as a helical span at residues 84-104 (IVYNLVVGLTPLLSAYALGWL). The Cytoplasmic portion of the chain corresponds to 105–113 (SDRRHRKVA). The chain crosses the membrane as a helical span at residues 114-134 (ICVALLGFLLSRVGLLLKVLL). The Extracellular portion of the chain corresponds to 135–143 (DWPVEVLYG). A helical transmembrane segment spans residues 144–164 (AAALNGLCGGFSAFWAGVMAL). Over 165-179 (GSLGSSEGRRSVRLV) the chain is Cytoplasmic. The chain crosses the membrane as a helical span at residues 180–200 (LIDLILGLAGFCGSMASGHLF). Residues 201–210 (KQVAGHSGQG) are Extracellular-facing. The helical transmembrane segment at 211–231 (LVLTACSVSCATFALLYSLLV) threads the bilayer. Residues 232-286 (LKVPEAAAGSGQALSAGDSVAGTVGTYRTLDPDHSDKQSVQGLHPPSPGKAKPRR) lie on the Cytoplasmic side of the membrane. Residues 263 to 282 (PDHSDKQSVQGLHPPSPGKA) form a disordered region. Residues 287 to 307 (TIIALLFLGAIVYDLAVVGTV) form a helical membrane-spanning segment. At 308–326 (DVMPLFVLREPLSWNQVQV) the chain is on the extracellular side. The helical transmembrane segment at 327-347 (GYGMAAGYTIFITSFLGVLVF) threads the bilayer. Topologically, residues 348-353 (SRCFQD) are cytoplasmic. A helical transmembrane segment spans residues 354–374 (TTMIMIGMVSFGSGALLLAFV). The Extracellular portion of the chain corresponds to 375–376 (KE). A helical transmembrane segment spans residues 377 to 397 (TYMFYIARAVMLFALIPITTI). At 398 to 412 (RSAMSKLIKGSSYGK) the chain is on the cytoplasmic side. A helical transmembrane segment spans residues 413 to 433 (VFVILQLSLTLTGVVTSTVYN). Topologically, residues 434–446 (KIYQVTMEKFIGT) are extracellular. A helical membrane pass occupies residues 447–467 (CFALSSFLSFLAIIPIGIVAY). The Cytoplasmic portion of the chain corresponds to 468–481 (KQASWLQYGDVRET).

Belongs to the major facilitator superfamily. SLC46A family. Post-translationally, glycosylated. Highly expressed by the epididymal duct epithelium.

It is found in the endosome membrane. Its subcellular location is the cell membrane. It catalyses the reaction N-acetyl-beta-D-glucosaminyl-(1-&gt;4)-1,6-anhydro-N-acetyl-beta-D-muramoyl-L-alanyl-gamma-D-glutamyl-meso-2,6-diaminopimeloyl-D-alanine(out) + n H(+)(out) = N-acetyl-beta-D-glucosaminyl-(1-&gt;4)-1,6-anhydro-N-acetyl-beta-D-muramoyl-L-alanyl-gamma-D-glutamyl-meso-2,6-diaminopimeloyl-D-alanine(in) + n H(+)(in). The catalysed reaction is L-alanyl-gamma-D-glutamyl-meso-2,6-diaminopimelate(out) + n H(+)(out) = L-alanyl-gamma-D-glutamyl-meso-2,6-diaminopimelate(in) + n H(+)(in). It carries out the reaction N-acetyl-D-muramoyl-L-alanyl-D-isoglutamine(out) + n H(+)(out) = N-acetyl-D-muramoyl-L-alanyl-D-isoglutamine(in) + n H(+)(in). The enzyme catalyses 2',3'-cGAMP(out) + n H(+)(out) = 2',3'-cGAMP(in) + n H(+)(in). It catalyses the reaction 3',3'-cGAMP(out) + n H(+)(out) = 3',3'-cGAMP(in) + n H(+)(in). Proton-coupled transporter that delivers pathogen-associated or danger-associated molecular patterns to cytosolic pattern recognition receptors as part of the innate immune response to microbes or tissue injury. Has selectivity toward muropeptides that contain the amino acid diaminopimelic acid (DAP-type peptidoglycan muropeptides) including Tri-DAP and tracheal toxin (TCT), common in Gram-negative bacteria and Gram-positive bacilli. In the context of immune recognition of skin microbiota, shuttles bacterial muropeptides across the endolysosomal membranes into the cytosol for recognition by NOD1, triggering MYD88-dependent secretion of IL1A and neutrophil recruitment in a pyroptosis-type inflammatory process. To a lesser extent and redundantly, transports muramyl dipeptides derived from most bacterial proteoglycans, eliciting NOD2 receptor activation and downstream inflammatory responses. Postulated to function as an importer of cyclic GMP-AMP dinucleotides (cGAMPs) in monocyte and macrophage cell lineages. Selectively imports cGAMPs derived from pathogenic bacteria such as 3'3'-cGAMP thus providing for differential immune recognition of pathogenic versus commensal bacteria. During tumorigenesis may transport extracellular tumor-derived 2'3'-cGAMP across the plasma membrane of M1-polarized macrophages to activate the anti-tumoral stimulator of interferon genes (STING) pathway. The transport mechanism, its electrogenicity and stoichiometry remain to be elucidated. The chain is Solute carrier family 46 member 2 from Canis lupus familiaris (Dog).